Reading from the N-terminus, the 109-residue chain is uncharacterized protein (109 aa).

To E.coli YtfG C-terminal region.

This is an uncharacterized protein from Haemophilus influenzae (strain ATCC 51907 / DSM 11121 / KW20 / Rd).